Reading from the N-terminus, the 61-residue chain is Short neurotoxin 1 (61 aa).

Disulfide bonds link C3-C23, C17-C40, C42-C53, and C54-C59.

This sequence belongs to the three-finger toxin family. Short-chain subfamily. Type I alpha-neurotoxin sub-subfamily. In terms of tissue distribution, expressed by the venom gland.

It is found in the secreted. Functionally, binds to muscle nicotinic acetylcholine receptor (nAChR) and inhibit acetylcholine from binding to the receptor, thereby impairing neuromuscular transmission. In Naja philippinensis (Philippine cobra), this protein is Short neurotoxin 1.